Here is a 647-residue protein sequence, read N- to C-terminus: Threonine--tRNA ligase (647 aa).

In terms of domain architecture, TGS spans 1–63 (MDKINITFPD…EEDGSIEIVT (63 aa)). Residues 242–540 (DHRKIGKELD…LTEETKGAFP (299 aa)) are catalytic. Residues cysteine 336, histidine 387, and histidine 517 each coordinate Zn(2+).

It belongs to the class-II aminoacyl-tRNA synthetase family. As to quaternary structure, homodimer. Zn(2+) serves as cofactor.

Its subcellular location is the cytoplasm. The catalysed reaction is tRNA(Thr) + L-threonine + ATP = L-threonyl-tRNA(Thr) + AMP + diphosphate + H(+). Catalyzes the attachment of threonine to tRNA(Thr) in a two-step reaction: L-threonine is first activated by ATP to form Thr-AMP and then transferred to the acceptor end of tRNA(Thr). Also edits incorrectly charged L-seryl-tRNA(Thr). This Staphylococcus carnosus (strain TM300) protein is Threonine--tRNA ligase.